Here is a 159-residue protein sequence, read N- to C-terminus: U1 small nuclear ribonucleoprotein C (159 aa).

The Matrin-type zinc finger occupies 4–36 (FYCDYCDTYLTHDSPSVRKTHCSGRKHKENVKD). Residue Tyr8 is modified to Phosphotyrosine. A Phosphoserine modification is found at Ser17. The residue at position 52 (Lys52) is an N6-acetyllysine. The segment at 62–96 (IPPAPFSAPPPAGAMIPPPPSLPGPPRPGMMPAPH) is disordered. The span at 63-92 (PPAPFSAPPPAGAMIPPPPSLPGPPRPGMM) shows a compositional bias: pro residues.

The protein belongs to the U1 small nuclear ribonucleoprotein C family. Component of the U1 snRNP. The U1 snRNP is composed of the U1 snRNA and the 7 core Sm proteins SNRPB, SNRPD1, SNRPD2, SNRPD3, SNRPE, SNRPF and SNRPG that assemble in a heptameric protein ring on the Sm site of the small nuclear RNA to form the core snRNP, and at least 3 U1 snRNP-specific proteins SNRNP70/U1-70K, SNRPA/U1-A and SNRPC/U1-C. SNRPC/U1-C interacts with U1 snRNA and the 5' splice-site region of the pre-mRNA. Interacts (via N-terminus) with TIA1 (via C-terminus); thereby promoting spliceosomal U1 snRNP recruitment to 5' splice sites.

Its subcellular location is the nucleus. Functionally, component of the spliceosomal U1 snRNP, which is essential for recognition of the pre-mRNA 5' splice-site and the subsequent assembly of the spliceosome. SNRPC/U1-C is directly involved in initial 5' splice-site recognition for both constitutive and regulated alternative splicing. The interaction with the 5' splice-site seems to precede base-pairing between the pre-mRNA and the U1 snRNA. Stimulates commitment or early (E) complex formation by stabilizing the base pairing of the 5' end of the U1 snRNA and the 5' splice-site region. The sequence is that of U1 small nuclear ribonucleoprotein C from Rattus norvegicus (Rat).